Reading from the N-terminus, the 548-residue chain is Chaperonin GroEL (548 aa).

ATP is bound by residues 29–32 (TMGP), Lys50, 86–90 (DGTTT), Gly414, 478–480 (NAA), and Asp494.

This sequence belongs to the chaperonin (HSP60) family. As to quaternary structure, forms a cylinder of 14 subunits composed of two heptameric rings stacked back-to-back. Interacts with the co-chaperonin GroES.

The protein localises to the cytoplasm. It carries out the reaction ATP + H2O + a folded polypeptide = ADP + phosphate + an unfolded polypeptide.. In terms of biological role, together with its co-chaperonin GroES, plays an essential role in assisting protein folding. The GroEL-GroES system forms a nano-cage that allows encapsulation of the non-native substrate proteins and provides a physical environment optimized to promote and accelerate protein folding. The polypeptide is Chaperonin GroEL (Legionella pneumophila (strain Corby)).